Here is a 189-residue protein sequence, read N- to C-terminus: Auxin-responsive protein IAA3 (189 aa).

The EAR-like (transcriptional repression) motif lies at 12–16 (LRLGL). A disordered region spans residues 42 to 65 (TDTEKEIESSSRKTETSPPRKAQI). Basic and acidic residues predominate over residues 43-56 (DTEKEIESSSRKTE). The PB1 domain occupies 92–179 (GIYVKVSMDG…TCKRLRIMKG (88 aa)).

The protein belongs to the Aux/IAA family. As to quaternary structure, homodimers and heterodimers. Interacts with TPL. Interacts with TIR1, the F-box component of the Skp1-Cdc53/cullin-F-box (SCFTIR1) E3 ubiquitin ligase complex. In terms of processing, phosphorylated by phytochrome A in vitro. In terms of tissue distribution, highly expressed in stems and flowers. Expressed in hypocotyls, cotyledons and leaves, but barely detected in roots. Expressed in root tips. In the root meristem, specifically detected at the vascular tissue transition zone.

It is found in the nucleus. Functionally, aux/IAA proteins are short-lived transcriptional factors that function as repressors of early auxin response genes at low auxin concentrations. Repression is thought to result from the interaction with auxin response factors (ARFs), proteins that bind to the auxin-responsive promoter element (AuxRE). Plays a central role in auxin regulation of root growth, in gravitropism, and in lateral root formation. Regulated by an auxin-induced protein turnover. Formation of heterodimers with ARF proteins may alter their ability to modulate early auxin response genes expression. When activated by cytokinin, restricts the expression of the PIN genes to the vascular transition zone. Induction of SHY2 in the vascular transition zone restricts BRX expression to down-regulate PIN3 and thus limit meristem growth, but proper SHY2 expression requires BRX. Involved in meristem growth and in determining its size. May participate in strigolactone signaling to regulate meristem size and lateral root formation. This chain is Auxin-responsive protein IAA3 (IAA3), found in Arabidopsis thaliana (Mouse-ear cress).